Reading from the N-terminus, the 140-residue chain is Large ribosomal subunit protein bL17 (140 aa).

It belongs to the bacterial ribosomal protein bL17 family. Part of the 50S ribosomal subunit. Contacts protein L32.

This chain is Large ribosomal subunit protein bL17, found in Hyphomonas neptunium (strain ATCC 15444).